The primary structure comprises 162 residues: NADH-quinone oxidoreductase subunit I (162 aa).

4Fe-4S ferredoxin-type domains follow at residues 54–83 and 93–122; these read RRYENGEERCIACKLCEAVCPALAITIESE and TRYDIDLTKCIFCGFCEESCPVDSIVETQI. Residues Cys-63, Cys-66, Cys-69, Cys-73, Cys-102, Cys-105, Cys-108, and Cys-112 each contribute to the [4Fe-4S] cluster site.

It belongs to the complex I 23 kDa subunit family. As to quaternary structure, NDH-1 is composed of 14 different subunits. Subunits NuoA, H, J, K, L, M, N constitute the membrane sector of the complex. Requires [4Fe-4S] cluster as cofactor.

The protein localises to the cell inner membrane. It catalyses the reaction a quinone + NADH + 5 H(+)(in) = a quinol + NAD(+) + 4 H(+)(out). NDH-1 shuttles electrons from NADH, via FMN and iron-sulfur (Fe-S) centers, to quinones in the respiratory chain. The immediate electron acceptor for the enzyme in this species is believed to be ubiquinone. Couples the redox reaction to proton translocation (for every two electrons transferred, four hydrogen ions are translocated across the cytoplasmic membrane), and thus conserves the redox energy in a proton gradient. This Burkholderia mallei (strain NCTC 10247) protein is NADH-quinone oxidoreductase subunit I.